The following is a 218-amino-acid chain: Probable nicotinate-nucleotide adenylyltransferase (218 aa).

Belongs to the NadD family.

The enzyme catalyses nicotinate beta-D-ribonucleotide + ATP + H(+) = deamido-NAD(+) + diphosphate. Its pathway is cofactor biosynthesis; NAD(+) biosynthesis; deamido-NAD(+) from nicotinate D-ribonucleotide: step 1/1. Functionally, catalyzes the reversible adenylation of nicotinate mononucleotide (NaMN) to nicotinic acid adenine dinucleotide (NaAD). In Burkholderia lata (strain ATCC 17760 / DSM 23089 / LMG 22485 / NCIMB 9086 / R18194 / 383), this protein is Probable nicotinate-nucleotide adenylyltransferase.